A 404-amino-acid polypeptide reads, in one-letter code: UPF0674 endoplasmic reticulum membrane protein YNR021W (404 aa).

S2 carries the post-translational modification N-acetylserine. N-linked (GlcNAc...) asparagine glycosylation occurs at N44. Residues 49-68 (LCALGVLFLVYAFYKFGNSV) traverse the membrane as a helical segment. N-linked (GlcNAc...) asparagine glycosylation is present at N98. The disordered stretch occupies residues 369-404 (AKRRQLKASGQQEKVDQKMKEKRERRLKNKQRTRFQ). Basic and acidic residues predominate over residues 381-392 (EKVDQKMKEKRE). The segment covering 393-404 (RRLKNKQRTRFQ) has biased composition (basic residues).

Belongs to the UPF0674 family.

It localises to the endoplasmic reticulum membrane. The chain is UPF0674 endoplasmic reticulum membrane protein YNR021W from Saccharomyces cerevisiae (strain ATCC 204508 / S288c) (Baker's yeast).